The sequence spans 292 residues: GTP cyclohydrolase FolE2 (292 aa).

It belongs to the GTP cyclohydrolase IV family.

It catalyses the reaction GTP + H2O = 7,8-dihydroneopterin 3'-triphosphate + formate + H(+). It functions in the pathway cofactor biosynthesis; 7,8-dihydroneopterin triphosphate biosynthesis; 7,8-dihydroneopterin triphosphate from GTP: step 1/1. In terms of biological role, converts GTP to 7,8-dihydroneopterin triphosphate. The sequence is that of GTP cyclohydrolase FolE2 from Staphylococcus aureus (strain MRSA252).